The primary structure comprises 993 residues: DNA double-strand break repair Rad50 ATPase (993 aa).

ATP contacts are provided by residues arginine 12, 32 to 38 (NGSGKSS), and glutamine 133. Coiled-coil stretches lie at residues 192 to 222 (LENL…LEKL) and 402 to 493 (EELK…LEKT). A Zinc-hook domain is found at 452 to 556 (ENELKEKYED…KLNEIDSFKL (105 aa)). Zn(2+) is bound by residues cysteine 497 and cysteine 500. Coiled-coil stretches lie at residues 570-612 (KVEE…LEND), 646-677 (DSSK…EINL), and 702-731 (ETEK…VLKN).

The protein belongs to the SMC family. RAD50 subfamily. As to quaternary structure, homodimer. Forms a heterotetramer composed of two Mre11 subunits and two Rad50 subunits. Zn(2+) is required as a cofactor.

Functionally, part of the Rad50/Mre11 complex, which is involved in the early steps of DNA double-strand break (DSB) repair. The complex may facilitate opening of the processed DNA ends to aid in the recruitment of HerA and NurA. Rad50 controls the balance between DNA end bridging and DNA resection via ATP-dependent structural rearrangements of the Rad50/Mre11 complex. The polypeptide is DNA double-strand break repair Rad50 ATPase (Methanococcus maripaludis (strain DSM 14266 / JCM 13030 / NBRC 101832 / S2 / LL)).